A 389-amino-acid chain; its full sequence is NAD-dependent protein deacetylase sirtuin-2 (389 aa).

A disordered region spans residues 1 to 34 (MAEPDPSHPLETQAGKVQEAQDSDSDSEGGAAGG). Position 2 is an N-acetylalanine (A2). 4 positions are modified to phosphoserine: S23, S25, S27, and S53. The Deacetylase sirtuin-type domain occupies 57 to 338 (RLLDELTLEG…LALAELLGWK (282 aa)). Residues 85–89 (AGIST) and 95–97 (DFR) each bind NAD(+). The residue at position 100 (S100) is a Phosphoserine. 167–170 (QNID) contributes to the NAD(+) binding site. Residue H187 is the Proton acceptor of the active site. Positions 195 and 200 each coordinate Zn(2+). A Phosphoserine modification is found at S207. C221 and C224 together coordinate Zn(2+). Residues 262-263 (TS), 286-288 (NKE), and C324 each bind NAD(+). Residues 350–389 (ASIDAQSGAEAPNPSTSASPRKSPPPAQDEARTTEREKPQ) form a disordered region. 2 positions are modified to phosphoserine: S368 and S372. Residues 378–389 (DEARTTEREKPQ) show a composition bias toward basic and acidic residues.

The protein belongs to the sirtuin family. Class I subfamily. As to quaternary structure, interacts with CDC20, FOXO3 and FZR1. Associates with microtubules in primary cortical mature neurons. Homotrimer. Interacts (via both phosphorylated, unphosphorylated, active or inactive forms) with HDAC6; the interaction is necessary for the complex to interact with alpha-tubulin, suggesting that these proteins belong to a large complex that deacetylates the cytoskeleton. Interacts with FOXO1; the interaction is disrupted upon serum-starvation or oxidative stress, leading to increased level of acetylated FOXO1 and induction of autophagy. Interacts with RELA; the interaction occurs in the cytoplasm and is increased in a TNF-alpha-dependent manner. Interacts with HOXA10; the interaction is direct. Interacts with YWHAB and YWHAG; the interactions occur in a AKT-dependent manner and increase SIRT2-dependent TP53 deacetylation. Interacts with MAPK1/ERK2 and MAPK3/ERK1; the interactions increase SIRT2 stability and deacetylation activity. Interacts (phosphorylated form) with KMT5A isoform 2; the interaction is direct, stimulates KMT5A-mediated methyltransferase activity on histone at 'Lys-20' (H4K20me1) and is increased in a H(2)O(2)-induced oxidative stress-dependent manner. Interacts with G6PD; the interaction is enhanced by H(2)O(2) treatment. Interacts with a G1/S-specific cyclin E-CDK2 complex. Interacts with AURKA, CDK5R1 (p35 form) and CDK5 and HIF1A. Interacts with the tRNA ligase SARS1; recruited to the VEGFA promoter via interaction with SARS1. Interacts with BEX4; negatively regulates alpha-tubulin deacetylation by SIRT2. Requires Zn(2+) as cofactor. Phosphorylated at phosphoserine and phosphothreonine. Phosphorylated at Ser-368 by a mitotic kinase CDK1/cyclin B at the G2/M transition; phosphorylation regulates the delay in cell-cycle progression. Phosphorylated at Ser-368 by a mitotic kinase G1/S-specific cyclin E/Cdk2 complex; phosphorylation inactivates SIRT2-mediated alpha-tubulin deacetylation and thereby negatively regulates cell adhesion, cell migration and neurite outgrowth during neuronal differentiation. Phosphorylated by cyclin A/Cdk2 and p35-Cdk5 complexes and to a lesser extent by the cyclin D3/Cdk4 and cyclin B/Cdk1, in vitro. Dephosphorylated at Ser-368 by CDC14A and CDC14B around early anaphase. Post-translationally, acetylated by EP300; acetylation leads both to the decreased of SIRT2-mediated alpha-tubulin deacetylase activity and SIRT2-mediated down-regulation of TP53 transcriptional activity. In terms of processing, ubiquitinated.

The protein resides in the nucleus. Its subcellular location is the cytoplasm. It is found in the perinuclear region. It localises to the cytoskeleton. The protein localises to the microtubule organizing center. The protein resides in the centrosome. Its subcellular location is the centriole. It is found in the spindle. It localises to the midbody. The protein localises to the chromosome. The protein resides in the perikaryon. Its subcellular location is the cell projection. It is found in the growth cone. It localises to the myelin membrane. The enzyme catalyses N(6)-acetyl-L-lysyl-[protein] + NAD(+) + H2O = 2''-O-acetyl-ADP-D-ribose + nicotinamide + L-lysyl-[protein]. The catalysed reaction is N(6)-tetradecanoyl-L-lysyl-[protein] + NAD(+) + H2O = 2''-O-tetradecanoyl-ADP-D-ribose + nicotinamide + L-lysyl-[protein]. It carries out the reaction N(6)-hexadecanoyl-L-lysyl-[protein] + NAD(+) + H2O = 2''-O-hexadecanoyl-ADP-D-ribose + nicotinamide + L-lysyl-[protein]. Inhibited by Sirtinol, A3 and M15 small molecules. Inhibited by nicotinamide. In terms of biological role, NAD-dependent protein deacetylase, which deacetylates internal lysines on histone and alpha-tubulin as well as many other proteins such as key transcription factors. Participates in the modulation of multiple and diverse biological processes such as cell cycle control, genomic integrity, microtubule dynamics, cell differentiation, metabolic networks, and autophagy. Plays a major role in the control of cell cycle progression and genomic stability. Functions in the antephase checkpoint preventing precocious mitotic entry in response to microtubule stress agents, and hence allowing proper inheritance of chromosomes. Positively regulates the anaphase promoting complex/cyclosome (APC/C) ubiquitin ligase complex activity by deacetylating CDC20 and FZR1, then allowing progression through mitosis. Associates both with chromatin at transcriptional start sites (TSSs) and enhancers of active genes. Plays a role in cell cycle and chromatin compaction through epigenetic modulation of the regulation of histone H4 'Lys-20' methylation (H4K20me1) during early mitosis. Specifically deacetylates histone H4 at 'Lys-16' (H4K16ac) between the G2/M transition and metaphase enabling H4K20me1 deposition by KMT5A leading to ulterior levels of H4K20me2 and H4K20me3 deposition throughout cell cycle, and mitotic S-phase progression. Deacetylates KMT5A modulating KMT5A chromatin localization during the mitotic stress response. Also deacetylates histone H3 at 'Lys-57' (H3K56ac) during the mitotic G2/M transition. During oocyte meiosis progression, may deacetylate histone H4 at 'Lys-16' (H4K16ac) and alpha-tubulin, regulating spindle assembly and chromosome alignment by influencing microtubule dynamics and kinetochore function. Deacetylates histone H4 at 'Lys-16' (H4K16ac) at the VEGFA promoter and thereby contributes to regulate expression of VEGFA, a key regulator of angiogenesis. Deacetylates alpha-tubulin at 'Lys-40' and hence controls neuronal motility, oligodendroglial cell arbor projection processes and proliferation of non-neuronal cells. Phosphorylation at Ser-368 by a G1/S-specific cyclin E-CDK2 complex inactivates SIRT2-mediated alpha-tubulin deacetylation, negatively regulating cell adhesion, cell migration and neurite outgrowth during neuronal differentiation. Deacetylates PARD3 and participates in the regulation of Schwann cell peripheral myelination formation during early postnatal development and during postinjury remyelination. Involved in several cellular metabolic pathways. Plays a role in the regulation of blood glucose homeostasis by deacetylating and stabilizing phosphoenolpyruvate carboxykinase PCK1 activity in response to low nutrient availability. Acts as a key regulator in the pentose phosphate pathway (PPP) by deacetylating and activating the glucose-6-phosphate G6PD enzyme, and therefore, stimulates the production of cytosolic NADPH to counteract oxidative damage. Maintains energy homeostasis in response to nutrient deprivation as well as energy expenditure by inhibiting adipogenesis and promoting lipolysis. Attenuates adipocyte differentiation by deacetylating and promoting FOXO1 interaction to PPARG and subsequent repression of PPARG-dependent transcriptional activity. Plays a role in the regulation of lysosome-mediated degradation of protein aggregates by autophagy in neuronal cells. Deacetylates FOXO1 in response to oxidative stress or serum deprivation, thereby negatively regulating FOXO1-mediated autophagy. Deacetylates a broad range of transcription factors and co-regulators regulating target gene expression. Deacetylates transcriptional factor FOXO3 stimulating the ubiquitin ligase SCF(SKP2)-mediated FOXO3 ubiquitination and degradation. Deacetylates HIF1A and therefore promotes HIF1A degradation and inhibition of HIF1A transcriptional activity in tumor cells in response to hypoxia. Deacetylates RELA in the cytoplasm inhibiting NF-kappaB-dependent transcription activation upon TNF-alpha stimulation. Inhibits transcriptional activation by deacetylating p53/TP53 and EP300. Also deacetylates EIF5A. Functions as a negative regulator on oxidative stress-tolerance in response to anoxia-reoxygenation conditions. Plays a role as tumor suppressor. In addition to protein deacetylase activity, also has activity toward long-chain fatty acyl groups and mediates protein-lysine demyristoylation and depalmitoylation of target proteins, such as ARF6 and KRAS, thereby regulating their association with membranes. The protein is NAD-dependent protein deacetylase sirtuin-2 (SIRT2) of Macaca fascicularis (Crab-eating macaque).